Here is a 390-residue protein sequence, read N- to C-terminus: Cathepsin D (390 aa).

The propeptide at 1-44 (VIRIPLHKFTSIRRTMSEAAGXVXXLIAKGPISKYATGEPAVRQ) is activation peptide. Residues 59–385 (YYGEIGIGTP…DRDQNRVGLA (327 aa)) enclose the Peptidase A1 domain. 2 disulfide bridges follow: C71–C140 and C90–C97. D77 is a catalytic residue. N-linked (GlcNAc...) asparagine glycans are attached at residues N114 and N241. The cysteines at positions 264 and 268 are disulfide-linked. D273 is an active-site residue. C307 and C344 are joined by a disulfide.

This sequence belongs to the peptidase A1 family. In terms of assembly, consists of a light chain and a heavy chain. Interacts with ADAM30; this leads to activation of CTSD. Interacts with GRN; stabilizes CTSD; increases its proteolytic activity. In terms of processing, N- and O-glycosylated. Post-translationally, undergoes proteolytic cleavage and activation by ADAM30.

It is found in the lysosome. Its subcellular location is the melanosome. It localises to the secreted. The protein resides in the extracellular space. It catalyses the reaction Specificity similar to, but narrower than, that of pepsin A. Does not cleave the 4-Gln-|-His-5 bond in B chain of insulin.. Its function is as follows. Acid protease active in intracellular protein breakdown. Plays a role in APP processing following cleavage and activation by ADAM30 which leads to APP degradation. This is Cathepsin D (CTSD) from Bos taurus (Bovine).